The sequence spans 375 residues: Anhydro-N-acetylmuramic acid kinase (375 aa).

Residue 12–19 coordinates ATP; it reads GTSLDGVD.

Belongs to the anhydro-N-acetylmuramic acid kinase family.

The catalysed reaction is 1,6-anhydro-N-acetyl-beta-muramate + ATP + H2O = N-acetyl-D-muramate 6-phosphate + ADP + H(+). It functions in the pathway amino-sugar metabolism; 1,6-anhydro-N-acetylmuramate degradation. It participates in cell wall biogenesis; peptidoglycan recycling. Catalyzes the specific phosphorylation of 1,6-anhydro-N-acetylmuramic acid (anhMurNAc) with the simultaneous cleavage of the 1,6-anhydro ring, generating MurNAc-6-P. Is required for the utilization of anhMurNAc either imported from the medium or derived from its own cell wall murein, and thus plays a role in cell wall recycling. This chain is Anhydro-N-acetylmuramic acid kinase, found in Variovorax paradoxus (strain S110).